Consider the following 402-residue polypeptide: Digeranylgeranylglycerophospholipid reductase (402 aa).

Positions 15, 34, 45, 46, 48, 99, 123, 280, 292, and 293 each coordinate FAD.

The protein belongs to the geranylgeranyl reductase family. DGGGPL reductase subfamily. Requires FAD as cofactor.

It carries out the reaction a 2,3-bis-O-phytanyl-sn-glycerol 1-phospholipid + 8 oxidized 2[4Fe-4S]-[ferredoxin] = a 2,3-bis-O-(geranylgeranyl)-sn-glycerol 1-phospholipid + 8 reduced 2[4Fe-4S]-[ferredoxin] + 16 H(+). The catalysed reaction is 2,3-bis-O-(phytanyl)-sn-glycerol 1-phosphate + 8 oxidized 2[4Fe-4S]-[ferredoxin] = 2,3-bis-O-(geranylgeranyl)-sn-glycerol 1-phosphate + 8 reduced 2[4Fe-4S]-[ferredoxin] + 16 H(+). The enzyme catalyses a 2,3-bis-O-phytanyl-sn-glycerol 1-phospholipid + 8 A = a 2,3-bis-O-(geranylgeranyl)-sn-glycerol 1-phospholipid + 8 AH2. It catalyses the reaction CDP-2,3-bis-O-(geranylgeranyl)-sn-glycerol + 8 AH2 = CDP-2,3-bis-O-(phytanyl)-sn-glycerol + 8 A. It carries out the reaction archaetidylserine + 8 AH2 = 2,3-bis-O-phytanyl-sn-glycero-3-phospho-L-serine + 8 A. Its pathway is membrane lipid metabolism; glycerophospholipid metabolism. Its function is as follows. Is involved in the reduction of 2,3-digeranylgeranylglycerophospholipids (unsaturated archaeols) into 2,3-diphytanylglycerophospholipids (saturated archaeols) in the biosynthesis of archaeal membrane lipids. Catalyzes the formation of archaetidic acid (2,3-di-O-phytanyl-sn-glyceryl phosphate) from 2,3-di-O-geranylgeranylglyceryl phosphate (DGGGP) via the hydrogenation of each double bond of the isoprenoid chains. Is also probably able to reduce double bonds of geranyl groups in CDP-2,3-bis-O-(geranylgeranyl)-sn-glycerol and archaetidylserine, thus acting at various stages in the biosynthesis of archaeal membrane lipids. The chain is Digeranylgeranylglycerophospholipid reductase from Methanospirillum hungatei JF-1 (strain ATCC 27890 / DSM 864 / NBRC 100397 / JF-1).